Reading from the N-terminus, the 785-residue chain is Endonuclease MutS2 (785 aa).

Residue 335–342 participates in ATP binding; that stretch reads GPNTGGKT. One can recognise a Smr domain in the interval 710 to 785; sequence LDLRGERYED…GNGVTIVEFK (76 aa).

It belongs to the DNA mismatch repair MutS family. MutS2 subfamily. In terms of assembly, homodimer. Binds to stalled ribosomes, contacting rRNA.

Its function is as follows. Endonuclease that is involved in the suppression of homologous recombination and thus may have a key role in the control of bacterial genetic diversity. Acts as a ribosome collision sensor, splitting the ribosome into its 2 subunits. Detects stalled/collided 70S ribosomes which it binds and splits by an ATP-hydrolysis driven conformational change. Acts upstream of the ribosome quality control system (RQC), a ribosome-associated complex that mediates the extraction of incompletely synthesized nascent chains from stalled ribosomes and their subsequent degradation. Probably generates substrates for RQC. The protein is Endonuclease MutS2 of Listeria monocytogenes serotype 4b (strain F2365).